A 537-amino-acid polypeptide reads, in one-letter code: CTP synthase (537 aa).

Positions 1 to 269 (MNQTKYIFVT…DKVALKKLDL (269 aa)) are amidoligase domain. A CTP-binding site is contributed by S15. Position 15 (S15) interacts with UTP. 16-21 (SLGKGI) serves as a coordination point for ATP. Y56 contacts L-glutamine. D73 provides a ligand contact to ATP. Positions 73 and 143 each coordinate Mg(2+). CTP contacts are provided by residues 150–152 (DIE), 190–195 (KTKPTQ), and K226. Residues 190-195 (KTKPTQ) and K226 each bind UTP. Residues 295-537 (SIGLVGKYVE…IAAAVKHKNK (243 aa)) form the Glutamine amidotransferase type-1 domain. G357 is a binding site for L-glutamine. C384 (nucleophile; for glutamine hydrolysis) is an active-site residue. Residues 385–388 (LGMQ), E408, and R465 contribute to the L-glutamine site. Catalysis depends on residues H510 and E512.

The protein belongs to the CTP synthase family. Homotetramer.

It catalyses the reaction UTP + L-glutamine + ATP + H2O = CTP + L-glutamate + ADP + phosphate + 2 H(+). The enzyme catalyses L-glutamine + H2O = L-glutamate + NH4(+). It carries out the reaction UTP + NH4(+) + ATP = CTP + ADP + phosphate + 2 H(+). It functions in the pathway pyrimidine metabolism; CTP biosynthesis via de novo pathway; CTP from UDP: step 2/2. With respect to regulation, allosterically activated by GTP, when glutamine is the substrate; GTP has no effect on the reaction when ammonia is the substrate. The allosteric effector GTP functions by stabilizing the protein conformation that binds the tetrahedral intermediate(s) formed during glutamine hydrolysis. Inhibited by the product CTP, via allosteric rather than competitive inhibition. Its function is as follows. Catalyzes the ATP-dependent amination of UTP to CTP with either L-glutamine or ammonia as the source of nitrogen. Regulates intracellular CTP levels through interactions with the four ribonucleotide triphosphates. The polypeptide is CTP synthase (Flavobacterium psychrophilum (strain ATCC 49511 / DSM 21280 / CIP 103535 / JIP02/86)).